The sequence spans 448 residues: Trigger factor (448 aa).

A PPIase FKBP-type domain is found at Gly167–Pro253.

Belongs to the FKBP-type PPIase family. Tig subfamily.

The protein resides in the cytoplasm. It catalyses the reaction [protein]-peptidylproline (omega=180) = [protein]-peptidylproline (omega=0). Functionally, involved in protein export. Acts as a chaperone by maintaining the newly synthesized protein in an open conformation. Functions as a peptidyl-prolyl cis-trans isomerase. The sequence is that of Trigger factor from Borrelia hermsii (strain HS1 / DAH).